We begin with the raw amino-acid sequence, 200 residues long: 2,3-bisphosphoglycerate-dependent phosphoglycerate mutase (200 aa).

The active-site Tele-phosphohistidine intermediate is His9. The active site involves His142.

Belongs to the phosphoglycerate mutase family. In terms of assembly, homodimer.

It carries out the reaction (2R)-2-phosphoglycerate = (2R)-3-phosphoglycerate. The protein operates within carbohydrate degradation; glycolysis; pyruvate from D-glyceraldehyde 3-phosphate: step 3/5. Its function is as follows. Catalyzes the interconversion of 2-phosphoglycerate and 3-phosphoglycerate. This chain is 2,3-bisphosphoglycerate-dependent phosphoglycerate mutase, found in Thermoplasma acidophilum (strain ATCC 25905 / DSM 1728 / JCM 9062 / NBRC 15155 / AMRC-C165).